The chain runs to 405 residues: Polyadenylate-binding protein RBP45B (405 aa).

Residues 1–19 (MMQQPPPGGILPHHAPPPS) are compositionally biased toward pro residues. The interval 1 to 54 (MMQQPPPGGILPHHAPPPSAQQQYGYQQPYGIAGAAPPPPQMWNPQAAAPPSVQ) is disordered. Residues 20–35 (AQQQYGYQQPYGIAGA) are compositionally biased toward low complexity. RRM domains follow at residues 62 to 143 (RTLW…WASL), 155 to 234 (YTIF…PAAS), and 261 to 333 (TTVF…WGRS). The segment at 379–405 (GGYQQTPQAGQQPPQQPPQQQQVGFSY) is disordered. The span at 380–405 (GYQQTPQAGQQPPQQPPQQQQVGFSY) shows a compositional bias: low complexity.

The protein belongs to the polyadenylate-binding RBP45 family. As to quaternary structure, both isoform 1 and isoform 2 interact with poly(A)+ RNA in nucleus. In terms of tissue distribution, expressed in roots, leaves, stems, flowers, siliques, and seedlings. Present in immature anther tissues (tapetum cells) and mature pollen grains.

The protein localises to the nucleus. Functionally, heterogeneous nuclear ribonucleoprotein (hnRNP)-protein binding the poly(A) tail of mRNA and probably involved in some steps of pre-mRNA maturation. This is Polyadenylate-binding protein RBP45B (RBP45B) from Arabidopsis thaliana (Mouse-ear cress).